The chain runs to 939 residues: Aconitate hydratase A (939 aa).

Residues 433 to 453 are disordered; that stretch reads GSGESLATGAEGRPSKPVTVA. Residues Cys-475, Cys-541, and Cys-544 each contribute to the [4Fe-4S] cluster site.

Belongs to the aconitase/IPM isomerase family. As to quaternary structure, monomer. [4Fe-4S] cluster serves as cofactor.

The catalysed reaction is citrate = D-threo-isocitrate. The enzyme catalyses (2S,3R)-3-hydroxybutane-1,2,3-tricarboxylate = 2-methyl-cis-aconitate + H2O. Its pathway is carbohydrate metabolism; tricarboxylic acid cycle; isocitrate from oxaloacetate: step 2/2. It functions in the pathway organic acid metabolism; propanoate degradation. Its function is as follows. Involved in the catabolism of short chain fatty acids (SCFA) via the tricarboxylic acid (TCA)(acetyl degradation route) and probably via the 2-methylcitrate cycle I (propionate degradation route). Catalyzes the reversible isomerization of citrate to isocitrate via cis-aconitate. Could catalyze the hydration of 2-methyl-cis-aconitate to yield (2R,3S)-2-methylisocitrate. The apo form of AcnA functions as a RNA-binding regulatory protein. The protein is Aconitate hydratase A (acn) of Corynebacterium glutamicum (strain ATCC 13032 / DSM 20300 / JCM 1318 / BCRC 11384 / CCUG 27702 / LMG 3730 / NBRC 12168 / NCIMB 10025 / NRRL B-2784 / 534).